Here is a 107-residue protein sequence, read N- to C-terminus: BolA-like protein 3 (107 aa).

This sequence belongs to the BolA/IbaG family. In terms of assembly, interacts with NFU1. In terms of tissue distribution, widely expressed.

It is found in the mitochondrion. In terms of biological role, acts as a mitochondrial iron-sulfur (Fe-S) cluster assembly factor that facilitates (Fe-S) cluster insertion into a subset of mitochondrial proteins. Probably acts together with NFU1. This Homo sapiens (Human) protein is BolA-like protein 3.